We begin with the raw amino-acid sequence, 325 residues long: GMP reductase (325 aa).

C174 (thioimidate intermediate) is an active-site residue. 203–226 contacts NADP(+); sequence IIADGGIRTNGDIAKSIRFGANMV.

This sequence belongs to the IMPDH/GMPR family. GuaC type 2 subfamily.

It catalyses the reaction IMP + NH4(+) + NADP(+) = GMP + NADPH + 2 H(+). Functionally, catalyzes the irreversible NADPH-dependent deamination of GMP to IMP. It functions in the conversion of nucleobase, nucleoside and nucleotide derivatives of G to A nucleotides, and in maintaining the intracellular balance of A and G nucleotides. The polypeptide is GMP reductase (Latilactobacillus sakei subsp. sakei (strain 23K) (Lactobacillus sakei subsp. sakei)).